The chain runs to 1177 residues: MTGQLVQYGRHRQRRSYARISEVLELPNLIEIQTSSYQWFLDEGLREMFQDISPIEDFTGNLSLEFIDYSLGEPKYSVDECKERDVTYAAPLRVKVRLINKETGEVKEQDVFMGDFPLMTETGTFVINGAERVIVSQLVRSPSVYYSGKVDKNGKRGFTATVIPNRGAWLEYETDAKDVVYVRIDRTRKLPVTVLLRALGFGSDQEITELLGDNEYLSNTLEKDNTDSTEKALLEIYERLRPGEPPTVENAKSLLVSRFFDPKRYDLANVGRYKINKKLHIKNRLFNQRLAETLVDPETGEILAAEGTILDRRTLDRILPYLEKNIGFKTAKPMGGVVEGDVELQSIKIYAPESEGERVINVIGNANITRDVKHITPGDILASISYFFNLLYKVGDTDDIDHLGNRRLRSVGELLQNQFRIGLSRMERVVRERMSIQDTNAITPQALINIRPVIASIKEFFGSSQLSQFMDQTNPLAELTHKRRLSALGPGGLTRERAGFEVRDVHYSHYGRMCPIETPEGPNIGLINSLSSFAKVNEFGFIETPYRRVDPETGLVTGHVDYLTADEEDNYVVAQANMKLSEEGEFLDEDIVARFRGENIVTNKERIDYMDVSPKQVVSAATACIPFLENDDSNRALMGANMQRQAVPLMNPESPIVGTGMEYVSAKDSGAAVICKHPGIVERVEAREVWVRRYVEVDGQTVKGDLDRYKMQKFIRSNQGTCYNQRPIVSVGNEVVKGEILADGPSMELGELALGRNVLVGFMTWDGYNYEDAIIMSERLVKDDVYTSIHIEEYESEARDTKLGPEEITRDIPNVGEDALRNLDERGIIRVGAEVKDGDLLVGKVTPKGVTELTAEERLLHAIFGEKAREVRDTSLRVPHGGGGIILDVKVFNREDGDELPPGVNQLVRAYIVQKRKISEGDKMAGRHGNKGVISRILPEEDMPYLPDGTPIDIMLNPLGVPSRMNIGQVLELHLGMAARYLGIHIATPVFDGAREEDVWGTIEEAGMANDAKTILYDGRTGEPFDNRVSVGVMYMIKLAHMVDDKLHARSTGPYSLVTQQPLGGKAQFGGQRFGEMEVWALEAYGAAYTLQEILTVKSDDVVGRVKTYEAIVKGENVPEPGVPESFKVLIKELQSLGMDVKMMSSDDTEIEMRDTEDDDDHQSADKLNVEVETTKE.

Acidic residues predominate over residues 1147–1161 (DDTEIEMRDTEDDDD). Positions 1147–1177 (DDTEIEMRDTEDDDDHQSADKLNVEVETTKE) are disordered. Over residues 1162–1177 (HQSADKLNVEVETTKE) the composition is skewed to basic and acidic residues.

The protein belongs to the RNA polymerase beta chain family. As to quaternary structure, the RNAP catalytic core consists of 2 alpha, 1 beta, 1 beta' and 1 omega subunit. When a sigma factor is associated with the core the holoenzyme is formed, which can initiate transcription.

The catalysed reaction is RNA(n) + a ribonucleoside 5'-triphosphate = RNA(n+1) + diphosphate. Functionally, DNA-dependent RNA polymerase catalyzes the transcription of DNA into RNA using the four ribonucleoside triphosphates as substrates. The sequence is that of DNA-directed RNA polymerase subunit beta from Bacillus thuringiensis (strain Al Hakam).